The sequence spans 556 residues: Oxygen-dependent choline dehydrogenase (556 aa).

Residue Asp-6–Glu-35 coordinates FAD. The Proton acceptor role is filled by His-475.

It belongs to the GMC oxidoreductase family. FAD serves as cofactor.

It catalyses the reaction choline + A = betaine aldehyde + AH2. The catalysed reaction is betaine aldehyde + NAD(+) + H2O = glycine betaine + NADH + 2 H(+). It participates in amine and polyamine biosynthesis; betaine biosynthesis via choline pathway; betaine aldehyde from choline (cytochrome c reductase route): step 1/1. Functionally, involved in the biosynthesis of the osmoprotectant glycine betaine. Catalyzes the oxidation of choline to betaine aldehyde and betaine aldehyde to glycine betaine at the same rate. The protein is Oxygen-dependent choline dehydrogenase of Xanthomonas axonopodis pv. citri (strain 306).